We begin with the raw amino-acid sequence, 542 residues long: Sialate O-acetylesterase (542 aa).

The signal sequence occupies residues 1-23 (MVSPRPVGLMLLLIIARVSRGAG). 8 N-linked (GlcNAc...) asparagine glycosylation sites follow: N107, N138, N188, N294, N357, N428, N449, and N463.

In terms of assembly, disulfide-linked heterodimer of a small subunit and a large subunit. Post-translationally, the two subunits are derived from a single precursor by proteolytic cleavage. In terms of processing, glycosylated. In terms of tissue distribution, widely expressed.

The protein localises to the lysosome. It carries out the reaction N-acetyl-9-O-acetylneuraminate + H2O = N-acetylneuraminate + acetate + H(+). The enzyme catalyses an Ac-O-9-sialoglycoconjugate + H2O = a sialoglycoconjugate + acetate + H(+). Its activity is regulated as follows. Inhibited by diisopropyl fluorophosphate and diethyl-P-nitrophenyl phosphate. Catalyzes the removal of O-acetyl ester groups from position 9 of the free diacetylated sialate N-acetyl-9-O-acetylneuraminate (Neu5,9Ac2) in the cytosol and of the diacetylated sialate residues of sialylglycoconjugates in the lysosomes. Together with the sialate-O-acetyltransferase they regulate the balance of acetylated sialoglycoconjugates, key players in various processes such as cell-cell interactions, host-pathogen recognition, and tumor antigenicity. This chain is Sialate O-acetylesterase (Siae), found in Rattus norvegicus (Rat).